We begin with the raw amino-acid sequence, 389 residues long: Dirigent protein 25 (389 aa).

Positions 1–21 are cleaved as a signal peptide; that stretch reads MAGCKVLFFLILALAITFVSA. 3 stretches are compositionally biased toward low complexity: residues 50 to 68, 77 to 86, and 98 to 135; these read GPFP…SGTG, LGTNTGPGPL, and SSGT…PLPT. Positions 50 to 135 are disordered; that stretch reads GPFPTANSGP…PGSGSGPLPT (86 aa).

Belongs to the plant dirigent protein family. In terms of assembly, homodimer.

It localises to the secreted. It is found in the extracellular space. The protein resides in the apoplast. In terms of biological role, dirigent proteins impart stereoselectivity on the phenoxy radical-coupling reaction, yielding optically active lignans from two molecules of coniferyl alcohol in the biosynthesis of lignans, flavonolignans, and alkaloids and thus plays a central role in plant secondary metabolism. This is Dirigent protein 25 (DIR25) from Arabidopsis thaliana (Mouse-ear cress).